The following is a 646-amino-acid chain: Acetyl-coenzyme A synthetase (646 aa).

CoA is bound by residues 190–193 (RAGK) and Thr-309. Residues 385–387 (GEP), 409–414 (DTWWQT), Asp-498, and Arg-513 contribute to the ATP site. A CoA-binding site is contributed by Ser-521. Arg-524 serves as a coordination point for ATP. 3 residues coordinate Mg(2+): Val-535, His-537, and Val-540. CoA is bound at residue Arg-582. Position 607 is an N6-acetyllysine (Lys-607).

Belongs to the ATP-dependent AMP-binding enzyme family. Mg(2+) is required as a cofactor. Post-translationally, acetylated. Deacetylation by the SIR2-homolog deacetylase activates the enzyme.

The catalysed reaction is acetate + ATP + CoA = acetyl-CoA + AMP + diphosphate. In terms of biological role, catalyzes the conversion of acetate into acetyl-CoA (AcCoA), an essential intermediate at the junction of anabolic and catabolic pathways. AcsA undergoes a two-step reaction. In the first half reaction, AcsA combines acetate with ATP to form acetyl-adenylate (AcAMP) intermediate. In the second half reaction, it can then transfer the acetyl group from AcAMP to the sulfhydryl group of CoA, forming the product AcCoA. In Pseudoalteromonas atlantica (strain T6c / ATCC BAA-1087), this protein is Acetyl-coenzyme A synthetase.